The sequence spans 455 residues: Beta-cyclopiazonate dehydrogenase (455 aa).

Residues M1–A20 form the signal peptide.

It belongs to the beta-cyclopiazonate dehydrogenase family. The cofactor is FAD.

The enzyme catalyses beta-cyclopiazonate + A = alpha-cyclopiazonate + AH2. In terms of biological role, beta-cyclopiazonate dehydrogenase involved in the synthesis of the fungal neurotoxin alpha-cyclopiazonic acid (CPA). CpaO carries out the dehydrogenation of beta-CPA to yield an unstable enimine product, which is captured by intramolecular cyclization to create the pentacyclic fused scaffold of alpha-cyclopiazonate. The polypeptide is Beta-cyclopiazonate dehydrogenase (Aspergillus flavus (strain ATCC 200026 / FGSC A1120 / IAM 13836 / NRRL 3357 / JCM 12722 / SRRC 167)).